The chain runs to 144 residues: Maximins 4/H3 type 1 (144 aa).

Residues 1–18 form the signal peptide; that stretch reads MNFKYIIAVSFFIASAYA. The propeptide occupies 19–43; sequence RSEEKDVQSLSQRDVLEEESLREIR. Asparagine 70 carries the post-translational modification Asparagine amide. Residues 74–123 constitute a propeptide that is removed on maturation; it reads TAEDHEVMKRLEAVMRDLDSLDHPEEASERETRGFNQEEIANLFTKKEKR. Isoleucine amide is present on isoleucine 143.

This sequence belongs to the bombinin family. As to expression, expressed by the skin glands.

The protein localises to the secreted. Maximin-4 shows antibacterial activity against both Gram-positive and Gram-negative bacteria. It also shows antimicrobial activity against the fungus C.albicans, but not against A.flavus nor P.uticale. It has little hemolytic activity. It does not possess a significant cytotoxicity against tumor cell lines. It does not possess a significant anti-HIV activity. In terms of biological role, maximin-H3 shows antibacterial activity against both Gram-positive and Gram-negative bacteria. It also shows antimicrobial activity against the fungus C.albicans. Shows strong hemolytic activity. The chain is Maximins 4/H3 type 1 from Bombina maxima (Giant fire-bellied toad).